The chain runs to 362 residues: G-prodeshotein coupled receptor 4 (362 aa).

The Extracellular portion of the chain corresponds to 1–8; it reads MGNHTWEG. An N-linked (GlcNAc...) asparagine glycan is attached at Asn3. Residues 9–45 traverse the membrane as a helical segment; it reads CHVDSRVDHLFPPSLYIFVIGVGLPTNCLALWAAYRQ. 2 cysteine pairs are disulfide-bonded: Cys9–Cys258 and Cys90–Cys168. At 46–49 the chain is on the cytoplasmic side; that stretch reads VQQR. Residues 50–80 form a helical membrane-spanning segment; it reads NELGVYLMNLSIADLLYICTLPLWVDYFLHH. At 81–85 the chain is on the extracellular side; the sequence is DNWIH. A helical transmembrane segment spans residues 86 to 121; sequence GPGSCKLFGFIFYTNIYISIAFLCCISVDRYLAVAH. Topologically, residues 122–129 are cytoplasmic; the sequence is PLRFARLR. The helical transmembrane segment at 130-156 threads the bilayer; sequence RVKTAVAVSSVVWATELGANSAPLFHD. Residues 157 to 172 are Extracellular-facing; sequence ELFRDRYNHTFCFEKF. An extracellular loop 2 (ECL2) region spans residues 157 to 172; that stretch reads ELFRDRYNHTFCFEKF. Asn164 is a glycosylation site (N-linked (GlcNAc...) asparagine). The helical transmembrane segment at 173 to 210 threads the bilayer; that stretch reads PMEGWVAWMNLYRVFVGFLFPWALMLLSYRGILRAVRG. At 211–214 the chain is on the cytoplasmic side; the sequence is SVST. The chain crosses the membrane as a helical span at residues 215-250; sequence ERQEKAKIKRLALSLIAIVLVCFAPYHVLLLSRSAI. At 251–260 the chain is on the extracellular side; it reads YLGRPWDCGF. A helical transmembrane segment spans residues 261 to 289; the sequence is EERVFSAYHSSLAFTSLNCVADPILYCLV. The Cytoplasmic segment spans residues 290-362; sequence NEGARSDVAK…VQLKMLPPAQ (73 aa). The segment at 335–362 is disordered; it reads AKAMTGSWAATPPSQGDQVQLKMLPPAQ.

The protein belongs to the G-protein coupled receptor 1 family.

Its subcellular location is the cell membrane. Activated by a network of residues that connects an extracellular-facing cavity to Glu-145, a conserved charged residue buried in the transmembrane core of the receptor. Protonation likely drives conformational changes in extracellular loop 2 (ECL2), which stabilizes movement of transmembrane 3 (TM3) and a series of rearrangements that connect the extracellular-facing cavity to Glu-145, a residue only conserved in proton-sensing G-protein coupled receptors. Its function is as follows. Proton-sensing G-protein coupled receptor activated by extracellular pH, which is required to monitor pH changes and generate adaptive reactions. Activated by an optimal pH of 6.8-7.2. Ligand binding causes a conformation change that triggers signaling via guanine nucleotide-binding proteins (G proteins) and modulates the activity of downstream effectors, such as adenylate cyclase. GPR4 is mainly coupled to G(s) G proteins and mediates activation of adenylate cyclase activity. May also couple with G(q) and G(12)/G(13) G proteins. Acts as a key regulator of respiratory sensitivity to CO2/H(+) in brain retrotrapezoid nucleus neurons: acts by mediating detection of protons generated by the formation of carbonic acid in the blood, an important mechanism to impulse to breathe. Also acts as a regulator of acid secretion in the kidney collecting duct by maintaining acid-base homeostasis in the kidney. Acidosis-induced GPR4 activation increases paracellular gap formation and permeability of vascular endothelial cells, possibly through the G(12)/G(13)/Rho GTPase signaling pathway. The chain is G-prodeshotein coupled receptor 4 from Homo sapiens (Human).